Consider the following 228-residue polypeptide: MNALRLIRIMQFADSVLPVGAFSFSNGLESAIQSKIVYDVATLSDFTRTALLQAVSSDGRAVMAACQALNSGQHDAAISHDWAIFNRKLNEESRTMVTRMGKKLAEMAVEVTGESLIAWWLAQIKSDIAAGTYPITLAVVMSALGAAPREVIVMHQYGVAMTILSAAIRLMRVTHIDIQRILFSLNQDIELFCDEAEKGGIEQMTSYAPMTDVLAALHVSAFTRLFSN.

This sequence belongs to the UreF family. UreD, UreF and UreG form a complex that acts as a GTP-hydrolysis-dependent molecular chaperone, activating the urease apoprotein by helping to assemble the nickel containing metallocenter of UreC. The UreE protein probably delivers the nickel.

The protein localises to the cytoplasm. Required for maturation of urease via the functional incorporation of the urease nickel metallocenter. This Photorhabdus laumondii subsp. laumondii (strain DSM 15139 / CIP 105565 / TT01) (Photorhabdus luminescens subsp. laumondii) protein is Urease accessory protein UreF.